We begin with the raw amino-acid sequence, 182 residues long: ATP synthase subunit delta 2 (182 aa).

The protein belongs to the ATPase delta chain family. As to quaternary structure, F-type ATPases have 2 components, F(1) - the catalytic core - and F(0) - the membrane proton channel. F(1) has five subunits: alpha(3), beta(3), gamma(1), delta(1), epsilon(1). F(0) has three main subunits: a(1), b(2) and c(10-14). The alpha and beta chains form an alternating ring which encloses part of the gamma chain. F(1) is attached to F(0) by a central stalk formed by the gamma and epsilon chains, while a peripheral stalk is formed by the delta and b chains.

It localises to the cell inner membrane. Its function is as follows. F(1)F(0) ATP synthase produces ATP from ADP in the presence of a proton or sodium gradient. F-type ATPases consist of two structural domains, F(1) containing the extramembraneous catalytic core and F(0) containing the membrane proton channel, linked together by a central stalk and a peripheral stalk. During catalysis, ATP synthesis in the catalytic domain of F(1) is coupled via a rotary mechanism of the central stalk subunits to proton translocation. In terms of biological role, this protein is part of the stalk that links CF(0) to CF(1). It either transmits conformational changes from CF(0) to CF(1) or is implicated in proton conduction. This chain is ATP synthase subunit delta 2, found in Photobacterium profundum (strain SS9).